Here is a 1347-residue protein sequence, read N- to C-terminus: Protocadherin-11 X-linked (1347 aa).

Residues 1–23 form the signal peptide; the sequence is MDLLSGTYIFAVLLACVVFHSGA. Over 24–812 the chain is Extracellular; sequence QEKNYTIREE…VSSPTSDYVK (789 aa). 7 Cadherin domains span residues 26 to 139, 140 to 249, 250 to 355, 362 to 466, 467 to 570, 571 to 673, and 677 to 795; these read KNYT…APLF, PATV…HPVF, KETE…VPSI, NPIN…APVF, TQSF…SPVF, THNE…KPVF, and PSNY…APVT. N-linked (GlcNAc...) asparagine glycans are attached at residues Asn-27, Asn-48, and Asn-54. Residue Asn-344 is glycosylated (N-linked (GlcNAc...) asparagine). Asn-553 carries an N-linked (GlcNAc...) asparagine glycan. The N-linked (GlcNAc...) asparagine glycan is linked to Asn-773. The helical transmembrane segment at 813-833 threads the bilayer; it reads ILVAAVAGTVTVVVVIFITAV. Residues 834 to 1347 lie on the Cytoplasmic side of the membrane; that stretch reads VRCRQAPHLK…DSPIMEEHPL (514 aa). 4 disordered regions span residues 1031-1050, 1057-1091, 1097-1116, and 1325-1347; these read IWIHPQPQRKSEGKGAGKSQ, LPEGSQESSSDGGLGEHDAGSLTSTSHGLPLGYPQ, RATPSNRTEGDGNSDPESTF, and TFTPRQQARPSRGDSPIMEEHPL.

The protein localises to the cell membrane. Potential calcium-dependent cell-adhesion protein. The protein is Protocadherin-11 X-linked (PCDH11X) of Pongo pygmaeus (Bornean orangutan).